Here is a 94-residue protein sequence, read N- to C-terminus: Protein RESPONSE TO LOW SULFUR 2 (94 aa).

Positions 15–63 form a coiled coil; the sequence is VDELRRKNGEMEKAVEEMKKEMLQLWRRTQVAEEAEERLCSQLAELEAE.

Its function is as follows. May be involved in defense responses monitoring. Probably implicated into osmotic stress signaling. The polypeptide is Protein RESPONSE TO LOW SULFUR 2 (Arabidopsis thaliana (Mouse-ear cress)).